The primary structure comprises 132 residues: Replication enhancer protein (132 aa).

This sequence belongs to the geminiviridae replication enhancer protein family. As to quaternary structure, homooligomer. Interacts with the replication-associated protein (REP). Interacts with host proliferating cell nuclear antigen (PCNA). Interacts with host retinoblastoma-related protein 1 (RBR1), and may thereby deregulate the host cell cycle. Oligomerization and interaction with PCNA are necessary for optimal replication enhancement.

Functionally, increases viral DNA accumulation. Enhances infectivity and symptom expression. This is Replication enhancer protein from Abutilon (Upland cotton).